Consider the following 543-residue polypeptide: MKNINPTTTKAWKELEDHYKEIKNEHMKDMFNNDEKRSEKFTIQWEDFYVDYSKNRITEDTRALLLQLAEECHLKDAINSYFGGEAINQTENRPVLHTALRANKDADIKVSNKNVVPEVQEVKAKIRDFSNDIIDGTQKGYTGKAFTDIVNIGIGGSDLGPVMVTESLEFYKNHLKVHFISNVDGDHVHETIKDLNPETTLFLIVSKTFTTMETLSNATTVREWFLKSAPQKEVSKHFVAVSTNLQQVEDFGIDVKNIFPMWDWVGGRFSLWSAVGLSISLAIGYENFESLLDGARKMDDHFKETSFEENLPVQLALISIWYNNFFKAESEAVIPYSQYLDKFPSYLQQAIMESNGKSVDRNGEKVDYQTGTIIWGEPGTNSQHAFFQLIHQGTKLIPTDFIGFKHSLFEDKDHQDKLMANYFAQTEALLNGKTEQEVEGELKSKAFSQEEIDRIKAFKVFEGNNPTNTILIEKLTPESMGKLIALYEHKIFVQGVIWNIFSYDQWGVELGKQLANKILAEFSSKTTDNHDSSTKKLLKFYMS.

The Proton donor role is filled by E353. Residues H384 and K512 contribute to the active site.

Belongs to the GPI family.

Its subcellular location is the cytoplasm. The catalysed reaction is alpha-D-glucose 6-phosphate = beta-D-fructose 6-phosphate. Its pathway is carbohydrate biosynthesis; gluconeogenesis. It functions in the pathway carbohydrate degradation; glycolysis; D-glyceraldehyde 3-phosphate and glycerone phosphate from D-glucose: step 2/4. Its function is as follows. Catalyzes the reversible isomerization of glucose-6-phosphate to fructose-6-phosphate. The protein is Glucose-6-phosphate isomerase of Christiangramia forsetii (strain DSM 17595 / CGMCC 1.15422 / KT0803) (Gramella forsetii).